Here is a 186-residue protein sequence, read N- to C-terminus: MGLKSDKWIREQSIENQMIEPFCEENIGKGVVSYGLSSYGYDIRVGCEFKIFTNIGGTVVDPKNFDEKNVVDFIGDICIVPPNSFALARTVEYFKMPHDVLAICLGKSTYARCGIIVNVTPFEPGFNGHITIEISNTTPLPAKIYANEGIAQVLFLQGDEPCETSYADKKGKYQDQEGITLPRILK.

107–112 (KSTYAR) provides a ligand contact to dCTP. The active-site Proton donor/acceptor is the Glu-133. DCTP contacts are provided by Gln-152, Tyr-166, and Gln-176.

This sequence belongs to the dCTP deaminase family. Homotrimer.

It carries out the reaction dCTP + H2O + H(+) = dUTP + NH4(+). It participates in pyrimidine metabolism; dUMP biosynthesis; dUMP from dCTP (dUTP route): step 1/2. Its function is as follows. Catalyzes the deamination of dCTP to dUTP. The polypeptide is dCTP deaminase (Campylobacter fetus subsp. fetus (strain 82-40)).